Reading from the N-terminus, the 259-residue chain is Phosphatidylglycerol--prolipoprotein diacylglyceryl transferase (259 aa).

Helical transmembrane passes span 9 to 29 (IIFSIGPLAISWYSLSYVIGI), 55 to 75 (FITYAVIGIIVGGRLGFVLLY), 92 to 112 (EGGMSFHGGALGGIITAYLFC), and 117 to 137 (INFLSLTDIIAPVVPIGLFLG). Residue Arg138 participates in a 1,2-diacyl-sn-glycero-3-phospho-(1'-sn-glycerol) binding. Transmembrane regions (helical) follow at residues 172–192 (QLYEAFFEGLVLFSILAYTTF), 201–221 (GLNSGIFFTFYGLFRITIEIF), and 228–248 (IGFILDSLTMGQILSVPMLLL).

This sequence belongs to the Lgt family.

The protein localises to the cell inner membrane. It catalyses the reaction L-cysteinyl-[prolipoprotein] + a 1,2-diacyl-sn-glycero-3-phospho-(1'-sn-glycerol) = an S-1,2-diacyl-sn-glyceryl-L-cysteinyl-[prolipoprotein] + sn-glycerol 1-phosphate + H(+). It participates in protein modification; lipoprotein biosynthesis (diacylglyceryl transfer). Catalyzes the transfer of the diacylglyceryl group from phosphatidylglycerol to the sulfhydryl group of the N-terminal cysteine of a prolipoprotein, the first step in the formation of mature lipoproteins. In Rickettsia africae (strain ESF-5), this protein is Phosphatidylglycerol--prolipoprotein diacylglyceryl transferase.